The primary structure comprises 221 residues: Phosphoribosylformylglycinamidine synthase subunit PurQ (221 aa).

In terms of domain architecture, Glutamine amidotransferase type-1 spans Lys-2–Lys-221. The active-site Nucleophile is the Cys-87. Residues His-195 and Glu-197 contribute to the active site.

As to quaternary structure, part of the FGAM synthase complex composed of 1 PurL, 1 PurQ and 2 PurS subunits.

The protein localises to the cytoplasm. It catalyses the reaction N(2)-formyl-N(1)-(5-phospho-beta-D-ribosyl)glycinamide + L-glutamine + ATP + H2O = 2-formamido-N(1)-(5-O-phospho-beta-D-ribosyl)acetamidine + L-glutamate + ADP + phosphate + H(+). The enzyme catalyses L-glutamine + H2O = L-glutamate + NH4(+). It participates in purine metabolism; IMP biosynthesis via de novo pathway; 5-amino-1-(5-phospho-D-ribosyl)imidazole from N(2)-formyl-N(1)-(5-phospho-D-ribosyl)glycinamide: step 1/2. Its function is as follows. Part of the phosphoribosylformylglycinamidine synthase complex involved in the purines biosynthetic pathway. Catalyzes the ATP-dependent conversion of formylglycinamide ribonucleotide (FGAR) and glutamine to yield formylglycinamidine ribonucleotide (FGAM) and glutamate. The FGAM synthase complex is composed of three subunits. PurQ produces an ammonia molecule by converting glutamine to glutamate. PurL transfers the ammonia molecule to FGAR to form FGAM in an ATP-dependent manner. PurS interacts with PurQ and PurL and is thought to assist in the transfer of the ammonia molecule from PurQ to PurL. The chain is Phosphoribosylformylglycinamidine synthase subunit PurQ from Deinococcus radiodurans (strain ATCC 13939 / DSM 20539 / JCM 16871 / CCUG 27074 / LMG 4051 / NBRC 15346 / NCIMB 9279 / VKM B-1422 / R1).